The primary structure comprises 287 residues: Probable endonuclease 4 (287 aa).

Zn(2+) is bound by residues His-69, His-109, Glu-146, Asp-180, His-183, His-217, Asp-230, His-232, and Glu-262.

This sequence belongs to the AP endonuclease 2 family. The cofactor is Zn(2+).

The catalysed reaction is Endonucleolytic cleavage to 5'-phosphooligonucleotide end-products.. Its function is as follows. Endonuclease IV plays a role in DNA repair. It cleaves phosphodiester bonds at apurinic or apyrimidinic (AP) sites, generating a 3'-hydroxyl group and a 5'-terminal sugar phosphate. The polypeptide is Probable endonuclease 4 (Petrotoga mobilis (strain DSM 10674 / SJ95)).